A 346-amino-acid polypeptide reads, in one-letter code: Haptoglobin-related protein (346 aa).

Residues 1 to 16 (DLGAVIYLLLWGRQLF) constitute a signal peptide (not cleaved). The Sushi domain maps to 32-85 (FPKPPEIANGYVEHLFRYQRKNYYRLRTEGDGVYTLNDKKQWINKAVGDKLPEC). One can recognise a Peptidase S1 domain in the interval 102-344 (ILGGHLDAKG…IHVWVQKTIA (243 aa)). 2 cysteine pairs are disulfide-bonded: Cys-249-Cys-280 and Cys-291-Cys-321.

Belongs to the peptidase S1 family.

Its subcellular location is the secreted. In terms of biological role, primate-specific plasma protein associated with apolipoprotein L-I (apoL-I)-containing high-density lipoprotein (HDL). Binds hemoglobin with high affinity and may contribute to the clearance of cell-free hemoglobin to allow hepatic recycling of heme iron. This chain is Haptoglobin-related protein (HPR), found in Pan troglodytes (Chimpanzee).